We begin with the raw amino-acid sequence, 117 residues long: Antimicrobial peptide AmAMP1 (117 aa).

An N-terminal signal peptide occupies residues 1 to 25 (MPSIRVLFVLLAVILLFMEVKMTSA). A propeptide spanning residues 26–73 (ASIVKDVDEDETLENEDGEAMENSWPWHGVEDTSDYSDLSDLANSEKR) is cleaved from the precursor. 3 disulfides stabilise this stretch: Cys-76-Cys-115, Cys-85-Cys-108, and Cys-94-Cys-112.

This sequence belongs to the coral AMP family.

The protein resides in the secreted. In terms of biological role, coral peptide that probably acts as an antimicrobial peptide in the surface mucous layer of planula larvae and likely also in adults. Shows moderate to high activity against some Gram-negative and Gram-positive bacteria (tested on E.coli, B.megaterium, S.aureus, E.aesturaii, B.algicola, Acinetobacter spec.). Does not show antibacterial activity against the coral pathogen V.coralliilyticus. This is Antimicrobial peptide AmAMP1 from Acropora millepora (Staghorn coral).